A 194-amino-acid chain; its full sequence is Fe/S biogenesis protein NfuA (194 aa).

Positions 152 and 155 each coordinate [4Fe-4S] cluster.

The protein belongs to the NfuA family. Homodimer. [4Fe-4S] cluster is required as a cofactor.

Involved in iron-sulfur cluster biogenesis. Binds a 4Fe-4S cluster, can transfer this cluster to apoproteins, and thereby intervenes in the maturation of Fe/S proteins. Could also act as a scaffold/chaperone for damaged Fe/S proteins. The chain is Fe/S biogenesis protein NfuA from Pseudomonas putida (strain GB-1).